Reading from the N-terminus, the 218-residue chain is Chromophore lyase CpcT/CpeT 1 (218 aa).

It belongs to the CpcT/CpeT biliprotein lyase family.

Covalently attaches a chromophore to Cys residue(s) of phycobiliproteins. This Synechococcus sp. (strain JA-3-3Ab) (Cyanobacteria bacterium Yellowstone A-Prime) protein is Chromophore lyase CpcT/CpeT 1.